The sequence spans 231 residues: Acyl-protein thioesterase 2 (231 aa).

The S-palmitoyl cysteine moiety is linked to residue C2. A Phosphoserine modification is found at S82. Catalysis depends on charge relay system residues S122, D176, and H210.

This sequence belongs to the AB hydrolase superfamily. AB hydrolase 2 family. Expressed in various breast cancer cell lines.

The protein localises to the cytoplasm. The enzyme catalyses S-hexadecanoyl-L-cysteinyl-[protein] + H2O = L-cysteinyl-[protein] + hexadecanoate + H(+). The catalysed reaction is prostaglandin E2 1-glyceryl ester + H2O = prostaglandin E2 + glycerol + H(+). It carries out the reaction 1-hexadecanoyl-sn-glycero-3-phosphocholine + H2O = sn-glycerol 3-phosphocholine + hexadecanoate + H(+). It catalyses the reaction 1-octadecanoyl-sn-glycero-3-phosphocholine + H2O = octadecanoate + sn-glycerol 3-phosphocholine + H(+). The enzyme catalyses 1-hexadecanoyl-sn-glycero-3-phosphate + H2O = sn-glycerol 3-phosphate + hexadecanoate + H(+). The catalysed reaction is 1-hexadecanoyl-sn-glycero-3-phospho-L-serine + H2O = sn-glycero-3-phospho-L-serine + hexadecanoate + H(+). With respect to regulation, inhibited by compound 1 or (5,5-Dioxido-4H-thieno[3,2-c]thiochromen-2-yl)(4-(4-methoxyphenyl)piperazin-1-yl)methanone. Acts as an acyl-protein thioesterase hydrolyzing fatty acids from S-acylated cysteine residues in proteins such as trimeric G alpha proteins, GSDMD, GAP43, ZDHHC6 or HRAS. Deacylates GAP43. Mediates depalmitoylation of ZDHHC6. Has lysophospholipase activity. Hydrolyzes prostaglandin glycerol esters (PG-Gs) in the following order prostaglandin D2-glycerol ester (PGD2-G) &gt; prostaglandin E2 glycerol ester (PGE2-G) &gt; prostaglandin F2-alpha-glycerol ester (PGF2-alpha-G). Hydrolyzes 1-arachidonoylglycerol but not 2-arachidonoylglycerol or arachidonoylethanolamide. This is Acyl-protein thioesterase 2 (LYPLA2) from Homo sapiens (Human).